The sequence spans 86 residues: Toxin To8 (86 aa).

A signal peptide spans 1-20 (MTRFVLFISCFFLIGMVVEC). The region spanning 21–83 (KEGYLLGSRG…LWESDTNECG (63 aa)) is the LCN-type CS-alpha/beta domain. Cystine bridges form between cysteine 31–cysteine 82, cysteine 35–cysteine 57, cysteine 43–cysteine 63, and cysteine 47–cysteine 65. The residue at position 82 (cysteine 82) is a Cysteine amide.

Belongs to the long (4 C-C) scorpion toxin superfamily. Sodium channel inhibitor family. Beta subfamily. As to expression, expressed by the venom gland.

It is found in the secreted. Beta toxins bind voltage-independently at site-4 of sodium channels (Nav) and shift the voltage of activation toward more negative potentials thereby affecting sodium channel activation and promoting spontaneous and repetitive firing. This Tityus obscurus (Amazonian scorpion) protein is Toxin To8.